Here is a 66-residue protein sequence, read N- to C-terminus: MSIGIWQIAIVVILVVLLFGRGKISSLMGDVAKGIKSFKKGMATDITDEPEPKNVSENNQDSKDKE.

The helical transmembrane segment at 1–21 (MSIGIWQIAIVVILVVLLFGR) threads the bilayer. A disordered region spans residues 43 to 66 (ATDITDEPEPKNVSENNQDSKDKE). Residues 50 to 66 (PEPKNVSENNQDSKDKE) show a composition bias toward basic and acidic residues.

Belongs to the TatA/E family. As to quaternary structure, the Tat system comprises two distinct complexes: a TatABC complex, containing multiple copies of TatA, TatB and TatC subunits, and a separate TatA complex, containing only TatA subunits. Substrates initially bind to the TatABC complex, which probably triggers association of the separate TatA complex to form the active translocon.

Its subcellular location is the cell inner membrane. In terms of biological role, part of the twin-arginine translocation (Tat) system that transports large folded proteins containing a characteristic twin-arginine motif in their signal peptide across membranes. TatA could form the protein-conducting channel of the Tat system. This Pelagibacter ubique (strain HTCC1062) protein is Sec-independent protein translocase protein TatA.